The sequence spans 89 residues: Class II hydrophobin 2 (89 aa).

The signal sequence occupies residues 1–15 (MKLYIAAALLTLGLA). 4 disulfide bridges follow: Cys-34–Cys-74, Cys-45–Cys-66, Cys-46–Cys-58, and Cys-75–Cys-86.

It belongs to the cerato-ulmin hydrophobin family. In terms of assembly, homodimer. Homodimers further self-assemble to form highly ordered films at water-air interfaces through intermolecular interactions.

It localises to the secreted. The protein resides in the cell wall. In terms of biological role, aerial growth, conidiation, and dispersal of filamentous fungi in the environment rely upon a capability of their secreting small amphipathic proteins called hydrophobins (HPBs) with low sequence identity. Class I can self-assemble into an outermost layer of rodlet bundles on aerial cell surfaces, conferring cellular hydrophobicity that supports fungal growth, development and dispersal; whereas Class II form highly ordered films at water-air interfaces through intermolecular interactions but contribute nothing to the rodlet structure. This Trichoderma asperellum (strain ATCC 204424 / CBS 433.97 / NBRC 101777) protein is Class II hydrophobin 2.